Consider the following 338-residue polypeptide: MAEISILGAGGLTGKELLLLLSRQKEHEVVHITSDKLAGKTLAEVFPEIPFPKNLTFHSHEAAIPSQSLVVLAVPNNVSIESAPKFLDSGHKVIDLSGAYRLHNQEIFEKAYQLKHTQFSYVDKAVFGIPEIFRDKLKNADFVSNPGCFSTSVILPVFLLNELRKNLRPRIIADSKSGVSGAGGRTEDAGYSYTGVYENFRAYKILSHQHEPEIKEYIYANSGLLEPEVIFTPHLLPVYRGILSTIVLELDTESFSDPISILQNSCKNEPFLRILKTPEEIELKRVQHTNFLDISVRKRGNTLVIVSALDNLIKGAAGQALQNINLMTGTKEVLGLFP.

C148 is a catalytic residue.

This sequence belongs to the NAGSA dehydrogenase family. Type 1 subfamily.

The protein resides in the cytoplasm. The enzyme catalyses N-acetyl-L-glutamate 5-semialdehyde + phosphate + NADP(+) = N-acetyl-L-glutamyl 5-phosphate + NADPH + H(+). It participates in amino-acid biosynthesis; L-arginine biosynthesis; N(2)-acetyl-L-ornithine from L-glutamate: step 3/4. In terms of biological role, catalyzes the NADPH-dependent reduction of N-acetyl-5-glutamyl phosphate to yield N-acetyl-L-glutamate 5-semialdehyde. This is N-acetyl-gamma-glutamyl-phosphate reductase from Leptospira borgpetersenii serovar Hardjo-bovis (strain JB197).